Reading from the N-terminus, the 567-residue chain is Wee1-like protein kinase 2 (567 aa).

Composition is skewed to basic and acidic residues over residues 1-12, 25-35, 42-51, and 64-77; these read MDDKDIDKELRQ, EGQKKVEESRE, EKGEVQDSEA, and HELD…KESP. A disordered region spans residues 1–117; that stretch reads MDDKDIDKEL…DSPSTPKTML (117 aa). Ser76 bears the Phosphoserine mark. The Nuclear localization signal signature appears at 173 to 175; it reads KRK. Residues 212–486 enclose the Protein kinase domain; the sequence is FLEVEKIGVG…AAALARNTVL (275 aa). ATP is bound by residues 218 to 226 and Lys241; that span reads IGVGEFGTV. A Nuclear export signal motif is present at residues 315-329; it reads KLKDILLQISLGLNY. Asp339 (proton acceptor) is an active-site residue. Mg(2+)-binding residues include Asn344 and Asp380. The stretch at 494-519 forms a coiled coil; that stretch reads EELQQQLNLEKFKTATLERELREAQQ. Positions 514 to 567 are disordered; the sequence is LREAQQAQSPQGYTHHGDTGVSGTHTGSRSTKRLVGGKSARSSSFTSGEREPLH.

It belongs to the protein kinase superfamily. Ser/Thr protein kinase family. WEE1 subfamily. Phosphorylated on serine residues. Phosphorylation leads to increase its activity. In terms of tissue distribution, expressed in oocytes (at protein level). May also be expressed in testis.

The protein localises to the nucleus. It carries out the reaction L-tyrosyl-[protein] + ATP = O-phospho-L-tyrosyl-[protein] + ADP + H(+). Its function is as follows. Oocyte-specific protein tyrosine kinase that phosphorylates and inhibits CDK1/CDC2 and acts as a key regulator of meiosis during both prophase I and metaphase II. Required to maintain meiotic arrest in oocytes during the germinal vesicle (GV) stage, a long period of quiescence at dictyate prophase I, by phosphorylating CDK1 at 'Tyr-15', leading to inhibit CDK1 activity and prevent meiotic reentry. Also required for metaphase II exit during egg activation by phosphorylating CDK1 at 'Tyr-15', to ensure exit from meiosis in oocytes and promote pronuclear formation. This Homo sapiens (Human) protein is Wee1-like protein kinase 2 (WEE2).